We begin with the raw amino-acid sequence, 155 residues long: Small ribosomal subunit protein uS7c (155 aa).

Belongs to the universal ribosomal protein uS7 family. In terms of assembly, part of the 30S ribosomal subunit.

The protein resides in the plastid. Its subcellular location is the chloroplast. In terms of biological role, one of the primary rRNA binding proteins, it binds directly to 16S rRNA where it nucleates assembly of the head domain of the 30S subunit. The sequence is that of Small ribosomal subunit protein uS7c (rps7) from Typha angustifolia (Narrow leaf cattail).